The sequence spans 537 residues: Atrial natriuretic peptide receptor 3 (537 aa).

A signal peptide spans 1-20 (MPSLLVLTFSACVLLGWALL). A propeptide spanning residues 21 to 41 (ADCTGGGGSGGAGPGRGRRER) is cleaved from the precursor. The Extracellular segment spans residues 42-477 (EALPPQKIEV…PCKASGGLEE (436 aa)). N-linked (GlcNAc...) asparagine glycosylation occurs at N82. Disulfide bonds link C104-C132 and C209-C257. Residues N289 and N390 are each glycosylated (N-linked (GlcNAc...) asparagine). A helical membrane pass occupies residues 478–500 (SAVTGIVVGALLGAGLLMAFYFF). At 501–537 (RKKYRITIERRNQQEESNVGKHRELREDSIRSHFSVA) the chain is on the cytoplasmic side.

This sequence belongs to the ANF receptor family. Homodimer; disulfide-linked. Interacts with OSTN.

Its subcellular location is the cell membrane. Its function is as follows. Receptor for the natriuretic peptide hormones, binding with similar affinities atrial natriuretic peptide NPPA/ANP, brain natriuretic peptide NPPB/BNP, and C-type natriuretic peptide NPPC/CNP. May function as a clearance receptor for NPPA, NPPB and NPPC, regulating their local concentrations and effects. Acts as a regulator of osteoblast differentiation and bone growth by binding to its ligand osteocrin, thereby preventing binding between NPR3/NPR-C and natriuretic peptides, leading to increase cGMP production. The polypeptide is Atrial natriuretic peptide receptor 3 (NPR3) (Bos taurus (Bovine)).